The following is a 297-amino-acid chain: Developmental pluripotency-associated protein 4 (297 aa).

A disordered region spans residues 1–77; it reads MEPSGSKKGR…KVPVPPFPQH (77 aa). Low complexity predominate over residues 23–34; that stretch reads SSQPSTSSAKTK. Over residues 43-63 the composition is skewed to basic and acidic residues; it reads SEKDDGCKPEEKSAQDPETPG. Ser211 bears the Phosphoserine mark.

Interacts with DPPA2. Interacts with PCGF1.

The protein resides in the nucleus. May be involved in the maintenance of active epigenetic status of target genes. May inhibit differentiation of embryonic stem (ES) cells into a primitive ectoderm lineage. The chain is Developmental pluripotency-associated protein 4 (Dppa4) from Rattus norvegicus (Rat).